Consider the following 131-residue polypeptide: Fimbrial assembly protein, serogroups C1 and C2 (131 aa).

This is Fimbrial assembly protein, serogroups C1 and C2 (fimB) from Dichelobacter nodosus (Bacteroides nodosus).